Reading from the N-terminus, the 183-residue chain is Ferredoxin-2, mitochondrial (183 aa).

Residues 1–52 (MAASVAWGGVNAGFLLRAARGAWWSRPGGFWGSGEAAAPAIARKFRATGSRP) constitute a mitochondrion transit peptide. Positions 68-170 (VNVVFVDRSG…GAEFTLPKIT (103 aa)) constitute a 2Fe-2S ferredoxin-type domain. The [2Fe-2S] cluster site is built by C105, C111, C114, and C151.

Belongs to the adrenodoxin/putidaredoxin family. In terms of assembly, component of the mitochondrial core iron-sulfur cluster (ISC) complex composed of NFS1, LYRM4, NDUFAB1, ISCU, FXN, and FDX2; this complex is a heterohexamer containing two copies of each monomer. Form a heterodimer complex with NFS1. Interacts (in both their reduced and oxidized states) with the cysteine desulfurase (NFS1:LYRM4) complex; this interaction stimulates cysteine desulfurase activity, and serves as a reductant for Fe-S cluster assembly. [2Fe-2S] cluster serves as cofactor.

The protein localises to the mitochondrion. It is found in the mitochondrion matrix. Electron donor, of the core iron-sulfur cluster (ISC) assembly complex, that acts to reduce the persulfide into sulfide during [2Fe-2S] clusters assembly on the scaffolding protein ISCU. The core iron-sulfur cluster (ISC) assembly complex is involved in the de novo synthesis of a [2Fe-2S] cluster, the first step of the mitochondrial iron-sulfur protein biogenesis. This process is initiated by the cysteine desulfurase complex (NFS1:LYRM4:NDUFAB1) that produces persulfide which is delivered on the scaffold protein ISCU in a FXN-dependent manner. Then this complex is stabilized by FDX2 which provides reducing equivalents to accomplish the [2Fe-2S] cluster assembly. Finally, the [2Fe-2S] cluster is transferred from ISCU to chaperone proteins, including HSCB, HSPA9 and GLRX5. Essential for coenzyme Q biosynthesis: together with FDXR, transfers the electrons required for the hydroxylation reaction performed by COQ6. This is Ferredoxin-2, mitochondrial from Bos taurus (Bovine).